Consider the following 545-residue polypeptide: MLPINNNFSLPQNSFYNTISGTYADYFSAWDKWEKQALPGEERDEAVSRLKECLINNSDELRLDRLNLSSLPDNLPAQITLLNVSYNQLTNLPELPVTLKKLYSASNKLSELPVLPPALESLQVQHNELENLPALPDSLLTMNISYNEIVSLPSLPQALKNLRATRNFLTELPAFSEGNNPVVREYFFDRNQISHIPESILNLRNECSIHISDNPLSSHALPALQRLTSSPDYHGPRIYFSMSDGQQNTLHRPLADAVTAWFPENKQSDVSQIWHAFEHEEHANTFSAFLDRLSDTVSARNTSGFREQVAAWLEKLSASAELRQQSFAVAADATESCEDRVALTWNNLRKTLLVHQASEGLFDNDTGALLSLGREMFRLEILEDIARDKVRTLHFVDEIEVYLAFQTMLAEKLQLSTAVKEMRFYGVSGVTANDLRTAEAMVRSREENEFTDWFSLWGPWHAVLKRTEADRWAQAEEQKYEMLENEYPQRVADRLKASGLSGDADAEREAGAQVMRETEQQIYRQLTDEVLALRLPENGSQLHHS.

The segment at 1 to 242 (MLPINNNFSL…YHGPRIYFSM (242 aa)) is interaction with target proteins. 8 LRR repeats span residues 57–77 (NSDE…NLPA), 78–99 (QITL…PVTL), 100–117 (KKLY…VLPP), 118–139 (ALES…PDSL), 140–157 (LTMN…SLPQ), 158–179 (ALKN…SEGN), 182–203 (VVRE…ILNL), and 205–228 (NECS…QRLT). A linker region spans residues 243–250 (SDGQQNTL). The E3 ubiquitin-protein ligase catalytic domain stretch occupies residues 251–545 (HRPLADAVTA…PENGSQLHHS (295 aa)). One can recognise an NEL domain in the interval 253 to 545 (PLADAVTAWF…PENGSQLHHS (293 aa)). The active-site Glycyl thioester intermediate is the C337.

Belongs to the LRR-containing bacterial E3 ligase family. As to quaternary structure, also interacts with human and mouse U2AF1 (U2AF35). Post-translationally, autoubiquitinated (in vitro). Ubiquitinated in the presence of host E1 ubiquitin-activating enzyme, E2 ubiquitin-conjugating enzyme and ubiquitin.

The protein localises to the secreted. It localises to the host cytoplasm. It is found in the host nucleus. It carries out the reaction S-ubiquitinyl-[E2 ubiquitin-conjugating enzyme]-L-cysteine + [acceptor protein]-L-lysine = [E2 ubiquitin-conjugating enzyme]-L-cysteine + N(6)-ubiquitinyl-[acceptor protein]-L-lysine.. Its pathway is protein modification; protein ubiquitination. Its activity is regulated as follows. Exists in an autoinhibited state in the absence of substrate protein, due to interactions of the leucine-rich repeats with NEL domain. Is activated upon binding to a substrate protein. Functionally, effector E3 ubiquitin ligase that interferes with host's ubiquitination pathway and modulates the acute inflammatory responses, thus facilitating bacterial colonization within the host cell. Interacts with IKBKG (NEMO) and TNIP1 (ABIN-1), a ubiquitin-binding adapter protein, which results in TNIP1-dependent 'Lys-27'-linked polyubiquitination of IKBKG. Consequently, polyubiquitinated IKBKG undergoes proteasome-dependent degradation, which perturbs NF-kappa-B activation during bacterial infection. Mediates polyubiquitination of host U2AF1, leading to its proteasomal degradation. Catalyzes 'Lys-48'-linked polyubiquitination and subsequent degradation of a subset of host guanylate-binding proteins (GBP1, GBP2, GBP4 and GBP6), thereby suppressing host cell defense. In contrast, host GBP3 and GBP7 are not ubiquitinated by IpaH9.8. Uses UBE2D2 (UBCH5B) as an E2 ubiquitin-conjugating enzyme. In Shigella flexneri, this protein is E3 ubiquitin-protein ligase ipaH9.8.